Here is a 101-residue protein sequence, read N- to C-terminus: Hg-scorpine-like-2 (101 aa).

The signal sequence occupies residues M1–C17. A BetaSPN-type CS-alpha/beta domain is found at Q60 to Y100. 3 disulfide bridges follow: C63–C87, C73–C92, and C77–C94.

This sequence belongs to the long chain scorpion toxin family. Class 3 subfamily. As to expression, expressed by the venom gland.

The protein resides in the secreted. In terms of biological role, inhibits voltage-gated potassium channels. The polypeptide is Hg-scorpine-like-2 (Hoffmannihadrurus gertschi (Scorpion)).